Reading from the N-terminus, the 432-residue chain is G-protein coupled receptor 22 (432 aa).

Over 1-45 (MCFSPVLEINMQSESNVTVRDDIDDIDTNMYQPLSYPLSFQVSLT) the chain is Extracellular. N-linked (GlcNAc...) asparagine glycosylation occurs at asparagine 16. The chain crosses the membrane as a helical span at residues 46–66 (GFLMLEIVLGLGSNLTVLVLY). The Cytoplasmic segment spans residues 67–85 (CMKSNLINSVSNIITMNLH). A helical membrane pass occupies residues 86–106 (VLDVIICVGCIPLTIVILLLS). The Extracellular segment spans residues 107-115 (LESNTALIC). Residues 116-136 (CFHEACVSFASVSTAINVFAI) form a helical membrane-spanning segment. Residues 137-156 (TLDRYDISVKPANRILTMGR) lie on the Cytoplasmic side of the membrane. Residues 157–177 (AVMLMTSIWIFSFFSFLIPFI) traverse the membrane as a helical segment. Residues 178-208 (EVNFFSLQSGNTWANKTLLCVSTSEYYTELG) are Extracellular-facing. An N-linked (GlcNAc...) asparagine glycan is attached at asparagine 192. Residues 209-229 (MYYHLLVQIPIFFFTVIVMLI) traverse the membrane as a helical segment. At 230–314 (TYTKILQALN…ERQKRVFKMS (85 aa)) the chain is on the cytoplasmic side. A helical transmembrane segment spans residues 315–335 (LLIISTFLLCWTPISVLNTTI). At 336-348 (LCLGPSDLLVKLR) the chain is on the extracellular side. A helical transmembrane segment spans residues 349 to 369 (LCFLVMAYGTTIFHPLLYAFT). Over 370 to 432 (RQKFQKVLKS…KCLVPQVVTD (63 aa)) the chain is Cytoplasmic.

The protein belongs to the G-protein coupled receptor 1 family. Abundant levels detected in the brain and heart and no detectable expression in other peripheral tissues.

The protein localises to the cell membrane. Orphan G-protein coupled receptor. Seems to act through a G(i)/G(o) mediated pathway. May be involved in ciliogenesis. This Mus musculus (Mouse) protein is G-protein coupled receptor 22 (Gpr22).